Consider the following 355-residue polypeptide: Anthranilate phosphoribosyltransferase (355 aa).

5-phospho-alpha-D-ribose 1-diphosphate-binding positions include Gly-99, 102–103, Thr-107, 109–112, 127–135, and Ser-139; these read GD, NIST, and KHGNRSVSS. An anthranilate-binding site is contributed by Gly-99. Ser-111 is a binding site for Mg(2+). Residue Asn-130 coordinates anthranilate. Position 185 (Arg-185) interacts with anthranilate. Residues Asp-243 and Glu-244 each contribute to the Mg(2+) site.

The protein belongs to the anthranilate phosphoribosyltransferase family. As to quaternary structure, homodimer. Requires Mg(2+) as cofactor.

The catalysed reaction is N-(5-phospho-beta-D-ribosyl)anthranilate + diphosphate = 5-phospho-alpha-D-ribose 1-diphosphate + anthranilate. It participates in amino-acid biosynthesis; L-tryptophan biosynthesis; L-tryptophan from chorismate: step 2/5. Functionally, catalyzes the transfer of the phosphoribosyl group of 5-phosphorylribose-1-pyrophosphate (PRPP) to anthranilate to yield N-(5'-phosphoribosyl)-anthranilate (PRA). This Pseudoalteromonas translucida (strain TAC 125) protein is Anthranilate phosphoribosyltransferase.